Reading from the N-terminus, the 455-residue chain is Argininosuccinate lyase (455 aa).

It belongs to the lyase 1 family. Argininosuccinate lyase subfamily.

It localises to the cytoplasm. The enzyme catalyses 2-(N(omega)-L-arginino)succinate = fumarate + L-arginine. It participates in amino-acid biosynthesis; L-arginine biosynthesis; L-arginine from L-ornithine and carbamoyl phosphate: step 3/3. The protein is Argininosuccinate lyase of Shewanella baltica (strain OS155 / ATCC BAA-1091).